The chain runs to 404 residues: Nicotinate phosphoribosyltransferase (404 aa).

His224 is modified (phosphohistidine; by autocatalysis).

This sequence belongs to the NAPRTase family. Post-translationally, transiently phosphorylated on a His residue during the reaction cycle. Phosphorylation strongly increases the affinity for substrates and increases the rate of nicotinate D-ribonucleotide production. Dephosphorylation regenerates the low-affinity form of the enzyme, leading to product release.

The enzyme catalyses nicotinate + 5-phospho-alpha-D-ribose 1-diphosphate + ATP + H2O = nicotinate beta-D-ribonucleotide + ADP + phosphate + diphosphate. It functions in the pathway cofactor biosynthesis; NAD(+) biosynthesis; nicotinate D-ribonucleotide from nicotinate: step 1/1. Catalyzes the synthesis of beta-nicotinate D-ribonucleotide from nicotinate and 5-phospho-D-ribose 1-phosphate at the expense of ATP. This chain is Nicotinate phosphoribosyltransferase, found in Photorhabdus laumondii subsp. laumondii (strain DSM 15139 / CIP 105565 / TT01) (Photorhabdus luminescens subsp. laumondii).